Consider the following 534-residue polypeptide: Peptide chain release factor 3 (534 aa).

Residues Ala9 to Gln278 form the tr-type G domain. GTP is bound by residues Ser18 to Thr25, Asp86 to His90, and Asn140 to Asp143.

This sequence belongs to the TRAFAC class translation factor GTPase superfamily. Classic translation factor GTPase family. PrfC subfamily.

It localises to the cytoplasm. Functionally, increases the formation of ribosomal termination complexes and stimulates activities of RF-1 and RF-2. It binds guanine nucleotides and has strong preference for UGA stop codons. It may interact directly with the ribosome. The stimulation of RF-1 and RF-2 is significantly reduced by GTP and GDP, but not by GMP. This Xanthomonas euvesicatoria pv. vesicatoria (strain 85-10) (Xanthomonas campestris pv. vesicatoria) protein is Peptide chain release factor 3.